The primary structure comprises 547 residues: CTP synthase (547 aa).

The segment at 1 to 266 (MTKYIFVTGG…GDYLVERLGL (266 aa)) is amidoligase domain. A CTP-binding site is contributed by S13. S13 is a binding site for UTP. 14 to 19 (SVGKGI) is an ATP binding site. Y54 is an L-glutamine binding site. Position 71 (D71) interacts with ATP. Residues D71 and E141 each coordinate Mg(2+). Residues 148-150 (DIE), 187-192 (KTKPTQ), and K223 contribute to the CTP site. Residues 187–192 (KTKPTQ) and K223 each bind UTP. The region spanning 291 to 533 (PIALVGKYVE…IAAAAQTLLA (243 aa)) is the Glutamine amidotransferase type-1 domain. L-glutamine is bound at residue G353. The active-site Nucleophile; for glutamine hydrolysis is C380. L-glutamine is bound by residues 381–384 (LGMQ), E404, and R461. Catalysis depends on residues H506 and E508.

The protein belongs to the CTP synthase family. In terms of assembly, homotetramer.

It carries out the reaction UTP + L-glutamine + ATP + H2O = CTP + L-glutamate + ADP + phosphate + 2 H(+). The catalysed reaction is L-glutamine + H2O = L-glutamate + NH4(+). It catalyses the reaction UTP + NH4(+) + ATP = CTP + ADP + phosphate + 2 H(+). It participates in pyrimidine metabolism; CTP biosynthesis via de novo pathway; CTP from UDP: step 2/2. With respect to regulation, allosterically activated by GTP, when glutamine is the substrate; GTP has no effect on the reaction when ammonia is the substrate. The allosteric effector GTP functions by stabilizing the protein conformation that binds the tetrahedral intermediate(s) formed during glutamine hydrolysis. Inhibited by the product CTP, via allosteric rather than competitive inhibition. In terms of biological role, catalyzes the ATP-dependent amination of UTP to CTP with either L-glutamine or ammonia as the source of nitrogen. Regulates intracellular CTP levels through interactions with the four ribonucleotide triphosphates. The sequence is that of CTP synthase from Chloroflexus aggregans (strain MD-66 / DSM 9485).